Consider the following 307-residue polypeptide: Methionyl-tRNA formyltransferase (307 aa).

110–113 (SLLP) contacts (6S)-5,6,7,8-tetrahydrofolate.

It belongs to the Fmt family.

The catalysed reaction is L-methionyl-tRNA(fMet) + (6R)-10-formyltetrahydrofolate = N-formyl-L-methionyl-tRNA(fMet) + (6S)-5,6,7,8-tetrahydrofolate + H(+). Attaches a formyl group to the free amino group of methionyl-tRNA(fMet). The formyl group appears to play a dual role in the initiator identity of N-formylmethionyl-tRNA by promoting its recognition by IF2 and preventing the misappropriation of this tRNA by the elongation apparatus. The protein is Methionyl-tRNA formyltransferase of Rhodococcus erythropolis (strain PR4 / NBRC 100887).